Here is a 220-residue protein sequence, read N- to C-terminus: Apoptosis regulator BALF1 (220 aa).

Belongs to the Epstein-Barr virus BALF1 family. Interacts with BHRF1; this interaction modulates BHRF1 activity. Interacts with host BAX and BAK1.

The protein resides in the host cytoplasm. In terms of biological role, modulates the antiapoptotic activity of the viral protein BHRF1. May also play an active part in oncogenesis in Burkitt's lymphomy and nasopharyngeal carcinoma. The protein is Apoptosis regulator BALF1 of Homo sapiens (Human).